The chain runs to 938 residues: Glutamate receptor 3.1 (938 aa).

The first 20 residues, 1–20 (MKFIFYLFSIFCCLCSCAQS), serve as a signal peptide directing secretion. Residues 21-588 (QNISGRPDAV…GGWAFLQPFT (568 aa)) lie on the Extracellular side of the membrane. N22, N39, N59, N340, N418, N436, and N551 each carry an N-linked (GlcNAc...) asparagine glycan. A helical membrane pass occupies residues 589-609 (IKMWTVTGLFFLIIGTVVWML). Residues 610–618 (EHRINDEFR) are Cytoplasmic-facing. A helical membrane pass occupies residues 619 to 639 (GPPAKQLITVFWFSFSTLFFA). The Cytoplasmic portion of the chain corresponds to 640 to 650 (HREDTRSTLGR). A helical transmembrane segment spans residues 651–671 (FVIIIWLFVVLIIQSSYTASL). Topologically, residues 672–830 (TSILTVQQLT…ELDQDPDRLD (159 aa)) are extracellular. A helical transmembrane segment spans residues 831 to 851 (VYSFSALFLICGLACIFALAI). At 852-938 (HACNLFYQYS…SGSGSTTASC (87 aa)) the chain is on the cytoplasmic side. The tract at residues 906-938 (AAKEKASGLGGSGGSMSGVSFTSSGSGSTTASC) is disordered. The span at 922–938 (SGVSFTSSGSGSTTASC) shows a compositional bias: low complexity.

It belongs to the glutamate-gated ion channel (TC 1.A.10.1) family. In terms of assembly, may form homomultimers. Expressed at low levels in roots and leaves.

It localises to the membrane. Its function is as follows. Glutamate-gated receptor that probably acts as a non-selective cation channel. Involved in root development. May regulate cell proliferation and cell death in the root apex. The polypeptide is Glutamate receptor 3.1 (GLR3.1) (Oryza sativa subsp. japonica (Rice)).